A 395-amino-acid polypeptide reads, in one-letter code: MSQHFHHNPVRVKSGSLFATASEALQARLSKIKRKDKECQAYFRKVIKSTFFQIVMITTVTTNSFLLVLGTNYDIQFEFFRTFEVSELFFVSVYVCEFLMKVYVDPITYWKDGYNILDVIILIILTIPYLLRKIKGNHSAYLHFADGIQSLRILKLISYSRGIRTLIIAVGETVYTVASVLTLLFLLMFVFAILGFCLFGVTDRGDLENWGNLASAFFTLFSLATVDGWTDLQEELDKRKFTVSRAFTILFILLASFIFLNMFVGVMIMHTEDSMKKFERDLTLERNLAIMEEKQIILKRQQEEVNRLMNTQKSGSMNFIDMVEGFKKTLRHTDPMVLDDFSTSLSFIDIYLVTLDNQDVIVSKLQELYCEIVNVLSLMLEDMPKESSSSLSGLS.

The Cytoplasmic portion of the chain corresponds to 1–48; that stretch reads MSQHFHHNPVRVKSGSLFATASEALQARLSKIKRKDKECQAYFRKVIK. Residues 49 to 71 form a helical membrane-spanning segment; that stretch reads STFFQIVMITTVTTNSFLLVLGT. At 72–80 the chain is on the extracellular side; that stretch reads NYDIQFEFF. Residues 81–107 form a helical membrane-spanning segment; sequence RTFEVSELFFVSVYVCEFLMKVYVDPI. Residue T108 is a topological domain, cytoplasmic. A helical transmembrane segment spans residues 109 to 131; sequence YWKDGYNILDVIILIILTIPYLL. At 132-143 the chain is on the extracellular side; that stretch reads RKIKGNHSAYLH. A helical transmembrane segment spans residues 144–160; it reads FADGIQSLRILKLISYS. Topologically, residues 161 to 168 are cytoplasmic; the sequence is RGIRTLII. The helical transmembrane segment at 169 to 195 threads the bilayer; it reads AVGETVYTVASVLTLLFLLMFVFAILG. Residues 196 to 216 lie on the Extracellular side of the membrane; it reads FCLFGVTDRGDLENWGNLASA. Positions 217 to 236 form an intramembrane region, helical; Pore-forming; the sequence is FFTLFSLATVDGWTDLQEEL. Residues 237-242 lie on the Extracellular side of the membrane; that stretch reads DKRKFT. The helical transmembrane segment at 243 to 268 threads the bilayer; that stretch reads VSRAFTILFILLASFIFLNMFVGVMI. At 269–395 the chain is on the cytoplasmic side; it reads MHTEDSMKKF…ESSSSLSGLS (127 aa).

The protein belongs to the cation channel sperm-associated (TC 1.A.1.19) family. In terms of assembly, component of the CatSper complex or CatSpermasome composed of the core pore-forming members CATSPER1, CATSPER2, CATSPER3 and CATSPER4 as well as auxiliary members CATSPERB, CATSPERG2, CATSPERD, CATSPERE, CATSPERZ, C2CD6/CATSPERT, SLCO6C1, TMEM249, TMEM262 and EFCAB9. HSPA1 may be an additional auxiliary complex member. The core complex members CATSPER1, CATSPER2, CATSPER3 and CATSPER4 form a heterotetrameric channel. The auxiliary CATSPERB, CATSPERG2, CATSPERD and CATSPERE subunits form a pavilion-like structure over the pore which stabilizes the complex through interactions with CATSPER4, CATSPER3, CATSPER1 and CATSPER2 respectively. SLCO6C1 interacts with CATSPERE and TMEM262/CATSPERH interacts with CATSPERB, further stabilizing the complex. C2CD6/CATSPERT interacts at least with CATSPERD and is required for targeting the CatSper complex in the flagellar membrane. As to expression, testis-specific.

Its subcellular location is the cell projection. It localises to the cilium. The protein localises to the flagellum membrane. It carries out the reaction Ca(2+)(in) = Ca(2+)(out). With respect to regulation, in contrast to the human ortholog, not activated by progesterone. Activated by intracellular alkalinization. In terms of biological role, pore-forming subunit of the CatSper complex, a sperm-specific voltage-gated calcium channel that plays a central role in sperm cell hyperactivation. Controls calcium entry to mediate the hyperactivated motility, a step needed for sperm motility which is essential late in the preparation of sperm for fertilization. In Mus musculus (Mouse), this protein is Cation channel sperm-associated protein 3 (Catsper3).